A 458-amino-acid chain; its full sequence is Ribosomal protein uS12 methylthiotransferase RimO (458 aa).

In terms of domain architecture, MTTase N-terminal spans Pro-8–Val-119. Cys-17, Cys-53, Cys-82, Cys-157, Cys-161, and Cys-164 together coordinate [4Fe-4S] cluster. Positions Thr-143–Glu-372 constitute a Radical SAM core domain. The 72-residue stretch at Ser-375 to Gly-446 folds into the TRAM domain.

This sequence belongs to the methylthiotransferase family. RimO subfamily. Requires [4Fe-4S] cluster as cofactor.

It localises to the cytoplasm. The catalysed reaction is L-aspartate(89)-[ribosomal protein uS12]-hydrogen + (sulfur carrier)-SH + AH2 + 2 S-adenosyl-L-methionine = 3-methylsulfanyl-L-aspartate(89)-[ribosomal protein uS12]-hydrogen + (sulfur carrier)-H + 5'-deoxyadenosine + L-methionine + A + S-adenosyl-L-homocysteine + 2 H(+). Its function is as follows. Catalyzes the methylthiolation of an aspartic acid residue of ribosomal protein uS12. This is Ribosomal protein uS12 methylthiotransferase RimO from Synechococcus sp. (strain CC9605).